The primary structure comprises 129 residues: Histone H2A.2 (129 aa).

Lys-5 carries the N6-acetyllysine modification. An N5-methylglutamine modification is found at Gln-108.

This sequence belongs to the histone H2A family. The nucleosome is a histone octamer containing two molecules each of H2A, H2B, H3 and H4 assembled in one H3-H4 heterotetramer and two H2A-H2B heterodimers. The octamer wraps approximately 147 bp of DNA. In terms of processing, acetylated by ESA1 to form H2AK4ac.

It localises to the nucleus. Its subcellular location is the chromosome. Its function is as follows. Core component of nucleosome which plays a central role in DNA double strand break (DSB) repair. Nucleosomes wrap and compact DNA into chromatin, limiting DNA accessibility to the cellular machineries which require DNA as a template. Histones thereby play a central role in transcription regulation, DNA repair, DNA replication and chromosomal stability. DNA accessibility is regulated via a complex set of post-translational modifications of histones, also called histone code, and nucleosome remodeling. The protein is Histone H2A.2 (HTA2) of Lodderomyces elongisporus (strain ATCC 11503 / CBS 2605 / JCM 1781 / NBRC 1676 / NRRL YB-4239) (Yeast).